A 236-amino-acid polypeptide reads, in one-letter code: UPF0257 lipoprotein YnfC (236 aa).

The signal sequence occupies residues 1–16 (MKYKLLPCLLAIFLTG). Cysteine 17 is lipidated: N-palmitoyl cysteine. Residue cysteine 17 is the site of S-diacylglycerol cysteine attachment.

The protein belongs to the UPF0257 family.

The protein resides in the cell membrane. This Escherichia coli O7:K1 (strain IAI39 / ExPEC) protein is UPF0257 lipoprotein YnfC.